A 392-amino-acid chain; its full sequence is Rhizopuspepsin-5 (392 aa).

An N-terminal signal peptide occupies residues 1–21; the sequence is MKFSLISSCVALAVLVLSTEA. A propeptide spans 22-69 (activation peptide); sequence APNGKKVNIPLTKNKDYKPNAKNAIQKVLAKYHRHRSTSSSSNSTSTD. One can recognise a Peptidase A1 domain in the interval 85–389; that stretch reads YFGQVKVGTP…NPTVPQVQIA (305 aa). Aspartate 103 is a catalytic residue. A disulfide bridge links cysteine 116 with cysteine 119. Aspartate 286 is an active-site residue. The cysteines at positions 320 and 353 are disulfide-linked.

This sequence belongs to the peptidase A1 family.

It catalyses the reaction Hydrolysis of proteins with broad specificity similar to that of pepsin A, preferring hydrophobic residues at P1 and P1'. Clots milk and activates trypsinogen. Does not cleave 4-Gln-|-His-5, but does cleave 10-His-|-Leu-11 and 12-Val-|-Glu-13 in B chain of insulin.. This is Rhizopuspepsin-5 from Rhizopus niveus.